A 500-amino-acid chain; its full sequence is MSNMQQKTDVILIGAGIMSATLGSLLKELAPEWEIKVFEKLASAGEESSNEWNNAGTGHSALCELNYTSEKSDGSIDIGKAVKVNEQFQLSRQFWAYLVKSKLIRNPQDFIMPLPHMSLVQGEKNVEFLKNRFEALSKNPLFQGMEFSDAPETLKKWLPLIMEGRTSNEPMAATKIDSGTDVNFGALTRMLFDYLKTKNVELNYKHSVENIKRTKNGLWEVKVHDMNSGKIEHHTAKFVFIGGGGGSLPLLQKTGIPESKHIGGFPVSGLFMVCKNQKVVEQHHAKVYGKAKVGAPPMSVPHLDTRYIDNKKALLFGPFAGFSPKFLKTGSNLDLIGSVKPNNVLTMLAAGVKEMGLTKYLIQQVMLSHEKRMEELREFIPNAKSEDWDIVVAGQRVQVIKDTDAGGKGTLQFGTEVVSAADGSIAALLGASPGASTAVHVMLEVLEKCFPSRMVEWEEKIKEMIPSYGISLTENPRLFQDLHTSTGRTLGLNEKETVHN.

Belongs to the MQO family. FAD serves as cofactor.

It catalyses the reaction (S)-malate + a quinone = a quinol + oxaloacetate. Its pathway is carbohydrate metabolism; tricarboxylic acid cycle; oxaloacetate from (S)-malate (quinone route): step 1/1. The chain is Probable malate:quinone oxidoreductase from Bacillus cereus (strain G9842).